Here is a 159-residue protein sequence, read N- to C-terminus: ATP synthase subunit b' (159 aa).

Residues 27–47 form a helical membrane-spanning segment; that stretch reads ATLPLMAVQFLILTVILNALL.

It belongs to the ATPase B chain family. As to quaternary structure, F-type ATPases have 2 components, F(1) - the catalytic core - and F(0) - the membrane proton channel. F(1) has five subunits: alpha(3), beta(3), gamma(1), delta(1), epsilon(1). F(0) has four main subunits: a(1), b(1), b'(1) and c(10-14). The alpha and beta chains form an alternating ring which encloses part of the gamma chain. F(1) is attached to F(0) by a central stalk formed by the gamma and epsilon chains, while a peripheral stalk is formed by the delta, b and b' chains.

The protein localises to the cellular thylakoid membrane. In terms of biological role, f(1)F(0) ATP synthase produces ATP from ADP in the presence of a proton or sodium gradient. F-type ATPases consist of two structural domains, F(1) containing the extramembraneous catalytic core and F(0) containing the membrane proton channel, linked together by a central stalk and a peripheral stalk. During catalysis, ATP synthesis in the catalytic domain of F(1) is coupled via a rotary mechanism of the central stalk subunits to proton translocation. Functionally, component of the F(0) channel, it forms part of the peripheral stalk, linking F(1) to F(0). The b'-subunit is a diverged and duplicated form of b found in plants and photosynthetic bacteria. This chain is ATP synthase subunit b', found in Synechococcus sp. (strain PCC 6716).